The primary structure comprises 88 residues: Sec-independent protein translocase protein TatA (88 aa).

A helical transmembrane segment spans residues 1–21 (MGGISITQLLIIASIVVVLFG). The segment at 39-88 (FKKSMSEDDNTTSTSSDKSSQDADFTAPPIEPKANLACPDEAKNKDKEHV) is disordered. The span at 49–62 (TTSTSSDKSSQDAD) shows a compositional bias: low complexity. A compositionally biased stretch (basic and acidic residues) spans 78–88 (DEAKNKDKEHV).

The protein belongs to the TatA/E family. As to quaternary structure, the Tat system comprises two distinct complexes: a TatABC complex, containing multiple copies of TatA, TatB and TatC subunits, and a separate TatA complex, containing only TatA subunits. Substrates initially bind to the TatABC complex, which probably triggers association of the separate TatA complex to form the active translocon.

It is found in the cell inner membrane. Part of the twin-arginine translocation (Tat) system that transports large folded proteins containing a characteristic twin-arginine motif in their signal peptide across membranes. TatA could form the protein-conducting channel of the Tat system. In Sodalis glossinidius (strain morsitans), this protein is Sec-independent protein translocase protein TatA.